A 999-amino-acid polypeptide reads, in one-letter code: Signal peptide, CUB and EGF-like domain-containing protein 2 (999 aa).

The first 31 residues, 1 to 31 (MGVAGRNRPGAAWAVLLLLLLLPPLLLLAGA), serve as a signal peptide directing secretion. The EGF-like 1; calcium-binding domain maps to 45 to 85 (DVDECAQGLDDCHADALCQNTPTSYKCSCKPGYQGEGRQCE). Intrachain disulfides connect Cys49/Cys62, Cys56/Cys71, Cys73/Cys84, Cys90/Cys102, Cys98/Cys111, and Cys113/Cys126. The EGF-like 2; calcium-binding domain maps to 86-127 (DIDECGNELNGGCVHDCLNIPGNYRCTCFDGFMLAHDGHNCL). The EGF-like 3; calcium-binding domain maps to 128–168 (DVDECLENNGGCQHTCVNVMGSYECCCKEGFFLSDNQHTCI). EGF-like domains lie at 177 to 213 (CMNK…QRDC), 217 to 252 (CNHG…GRSC), and 286 to 321 (CAVN…GKTC). One can recognise an EGF-like 7; calcium-binding domain in the interval 323–363 (DIDECQTRNGGCDHFCKNIVGSFDCGCKKGFKLLTDEKSCQ). The 39-residue stretch at 364-402 (DVDECSLDRTCDHSCINHPGTFACACNRGYTLYGFTHCG) folds into the EGF-like 8; calcium-binding domain. 6 disulfide bridges follow: Cys368–Cys378, Cys374–Cys387, Cys389–Cys401, Cys407–Cys418, Cys414–Cys427, and Cys429–Cys442. The EGF-like 9; calcium-binding domain occupies 403–443 (DTNECSINNGGCQQVCVNTVGSYECQCHPGYKLHWNKKDCV). Asn659 carries an N-linked (GlcNAc...) asparagine glycan. Cysteines 809 and 835 form a disulfide. The region spanning 809 to 921 (CGGELGDFTG…RGFQVPYVTY (113 aa)) is the CUB domain. The segment at 847-856 (ILIVVPEIFL) is interaction with the cholesterol-anchor of SHH. Residues Cys862 and Cys883 are joined by a disulfide bond.

Forms homooligomers. Forms heterooligomers with SCUBE1. Forms heterooligomers with SCUBE3. Interacts with SHH via the cholesterol anchor of the dually lipid-modified SHH (ShhNp). Interacts with PTCH1. Interacts with VEGFR2. N-glycosylated. In terms of tissue distribution, expressed in a broad spectrum of adult tissues.

Its subcellular location is the secreted. It is found in the cell surface. Functionally, lipid-binding protein required for SHH long-range signaling by binding to the dually lipid-modified SHH (ShhNp) and by promoting ShhNp mobilization, solubilization and release from the cell membrane. Acts by enhancing the proteolytic processing (shedding) of the lipid-modified N- and C- terminal of ShhNp at the cell surface. Synergizes with DISP1 to increase SHH secretion. Probable cell surface coreceptor for VEGFR2 involved in VEGFR2-mediated angiogenesis. This Homo sapiens (Human) protein is Signal peptide, CUB and EGF-like domain-containing protein 2.